The chain runs to 174 residues: Centrosomal protein 20 (174 aa).

The necessary and sufficient for homooligomerization and localization to centrosomes and pericentriolar satellites stretch occupies residues 1 to 104; the sequence is MATVAELKAV…AFEESKDNTI (104 aa). The region spanning 49 to 81 is the LisH domain; sequence ENLLINELIREYLEFNKYKYTASVLIAESGQPV. The disordered stretch occupies residues 129 to 174; the sequence is GPSLQPSDPSLGRQPSRRKPMDDHLRKEEQKSTNIEDLHVSQAVNR. Position 144 is a phosphoserine (Ser144). Residues 147–167 are compositionally biased toward basic and acidic residues; the sequence is KPMDDHLRKEEQKSTNIEDLH.

The protein belongs to the CEP43 family. In terms of assembly, homooligomer; probably required for localization to centrosomes. Forms a complex with KIAA0753/OFIP and OFD1; within this complex may stabilize the interaction between OFD1 and KIAA0753/OFIP. Interacts with PCM1; this interaction may be mediated by KIAA0753/OFIP. Interacts with PLK1 in later G1, S, G2 and M phases of the cell cycle; this interaction recruits PLK1 to centrosomes. Widely expressed. Detected in brain, heart, kidney, liver, lung, skeletal muscle, placenta and intestine.

The protein localises to the cytoplasm. It localises to the cytoskeleton. It is found in the microtubule organizing center. The protein resides in the centrosome. Its subcellular location is the centriole. The protein localises to the cell projection. It localises to the cilium. It is found in the cilium basal body. The protein resides in the cytoplasmic granule. Its subcellular location is the centriolar satellite. Functionally, involved in the biogenesis of cilia. Required for the recruitment of PLK1 to centrosomes and S phase progression. This is Centrosomal protein 20 from Homo sapiens (Human).